Here is a 155-residue protein sequence, read N- to C-terminus: Endoribonuclease YbeY (155 aa).

Zn(2+) is bound by residues His-114, His-118, and His-124.

This sequence belongs to the endoribonuclease YbeY family. Zn(2+) is required as a cofactor.

The protein localises to the cytoplasm. Single strand-specific metallo-endoribonuclease involved in late-stage 70S ribosome quality control and in maturation of the 3' terminus of the 16S rRNA. The chain is Endoribonuclease YbeY from Buchnera aphidicola subsp. Acyrthosiphon pisum (strain APS) (Acyrthosiphon pisum symbiotic bacterium).